The sequence spans 230 residues: 5'-methylthioadenosine/S-adenosylhomocysteine nucleosidase (230 aa).

Residue glutamate 12 is the Proton acceptor of the active site. Residues glycine 78, methionine 153, and 174–175 (ME) contribute to the substrate site. The Proton donor role is filled by aspartate 198.

The protein belongs to the PNP/UDP phosphorylase family. MtnN subfamily.

It carries out the reaction S-adenosyl-L-homocysteine + H2O = S-(5-deoxy-D-ribos-5-yl)-L-homocysteine + adenine. It catalyses the reaction S-methyl-5'-thioadenosine + H2O = 5-(methylsulfanyl)-D-ribose + adenine. The catalysed reaction is 5'-deoxyadenosine + H2O = 5-deoxy-D-ribose + adenine. Its pathway is amino-acid biosynthesis; L-methionine biosynthesis via salvage pathway; S-methyl-5-thio-alpha-D-ribose 1-phosphate from S-methyl-5'-thioadenosine (hydrolase route): step 1/2. Functionally, catalyzes the irreversible cleavage of the glycosidic bond in both 5'-methylthioadenosine (MTA) and S-adenosylhomocysteine (SAH/AdoHcy) to adenine and the corresponding thioribose, 5'-methylthioribose and S-ribosylhomocysteine, respectively. Also cleaves 5'-deoxyadenosine, a toxic by-product of radical S-adenosylmethionine (SAM) enzymes, into 5-deoxyribose and adenine. This Tolumonas auensis (strain DSM 9187 / NBRC 110442 / TA 4) protein is 5'-methylthioadenosine/S-adenosylhomocysteine nucleosidase.